A 299-amino-acid polypeptide reads, in one-letter code: Probable alpha-L-glutamate ligase 2 (299 aa).

Positions 104 to 287 (MQLMSRRGIG…VAGAIIEFVE (184 aa)) constitute an ATP-grasp domain. Residues Lys-141, 178 to 179 (EY), Asp-187, and 211 to 213 (RSN) contribute to the ATP site. Mg(2+) is bound by residues Asp-248, Glu-260, and Asn-262. 3 residues coordinate Mn(2+): Asp-248, Glu-260, and Asn-262.

Belongs to the RimK family. Requires Mg(2+) as cofactor. It depends on Mn(2+) as a cofactor.

This is Probable alpha-L-glutamate ligase 2 from Shewanella sp. (strain MR-4).